A 45-amino-acid polypeptide reads, in one-letter code: Photosystem II reaction center protein K (45 aa).

A propeptide spanning residues 1–8 is cleaved from the precursor; sequence MDFALLLA. A helical transmembrane segment spans residues 24 to 44; that stretch reads LPLIPLFFLLLAFVWQAAVGF.

The protein belongs to the PsbK family. As to quaternary structure, PSII is composed of 1 copy each of membrane proteins PsbA, PsbB, PsbC, PsbD, PsbE, PsbF, PsbH, PsbI, PsbJ, PsbK, PsbL, PsbM, PsbT, PsbX, PsbY, PsbZ, Psb30/Ycf12, peripheral proteins PsbO, CyanoQ (PsbQ), PsbU, PsbV and a large number of cofactors. It forms dimeric complexes.

It is found in the cellular thylakoid membrane. Functionally, one of the components of the core complex of photosystem II (PSII). PSII is a light-driven water:plastoquinone oxidoreductase that uses light energy to abstract electrons from H(2)O, generating O(2) and a proton gradient subsequently used for ATP formation. It consists of a core antenna complex that captures photons, and an electron transfer chain that converts photonic excitation into a charge separation. The protein is Photosystem II reaction center protein K of Gloeothece citriformis (strain PCC 7424) (Cyanothece sp. (strain PCC 7424)).